Here is a 543-residue protein sequence, read N- to C-terminus: tRNA (guanine(37)-N(1))-methyltransferase (543 aa).

Residues 1 to 59 constitute a mitochondrion transit peptide; it reads MLKSLCFVIRPAIVSRPQFRLPTIARLSLRQFQNQPQSVGFFTMAPLETRALALSPSAT. S-adenosyl-L-methionine contacts are provided by residues His282, 320 to 321, and 348 to 349; these read DL and DG. Residues 366–405 form a disordered region; that stretch reads DPAPPPKVSNRQRDREAKEARRKREQAKAAGQPVTETAPM. Asn431 is an S-adenosyl-L-methionine binding site.

Belongs to the class I-like SAM-binding methyltransferase superfamily. TRM5/TYW2 family. As to quaternary structure, monomer.

It localises to the mitochondrion matrix. The protein localises to the nucleus. The protein resides in the cytoplasm. The enzyme catalyses guanosine(37) in tRNA + S-adenosyl-L-methionine = N(1)-methylguanosine(37) in tRNA + S-adenosyl-L-homocysteine + H(+). Functionally, specifically methylates the N1 position of guanosine-37 in various cytoplasmic and mitochondrial tRNAs. Methylation is not dependent on the nature of the nucleoside 5' of the target nucleoside. This is the first step in the biosynthesis of wybutosine (yW), a modified base adjacent to the anticodon of tRNAs and required for accurate decoding. The protein is tRNA (guanine(37)-N(1))-methyltransferase of Cryptococcus neoformans var. neoformans serotype D (strain JEC21 / ATCC MYA-565) (Filobasidiella neoformans).